Consider the following 614-residue polypeptide: V-type proton ATPase catalytic subunit A (614 aa).

Residue 247-254 coordinates ATP; that stretch reads GAFGCGKT.

Belongs to the ATPase alpha/beta chains family. In terms of assembly, V-ATPase is a heteromultimeric enzyme made up of two complexes: the ATP-hydrolytic V1 complex and the proton translocation V0 complex. The V1 complex consists of three catalytic AB heterodimers that form a heterohexamer, three peripheral stalks each consisting of EG heterodimers, one central rotor including subunits D and F, and the regulatory subunits C and H. The proton translocation complex V0 consists of the proton transport subunit a, a ring of proteolipid subunits c9c'', rotary subunit d, subunits e and f, and the accessory subunits VhaAC45 and ATP6AP2.

It catalyses the reaction ATP + H2O + 4 H(+)(in) = ADP + phosphate + 5 H(+)(out). ATP hydrolysis occurs at the interface between the nucleotide-binding domains of subunits A and B. ATP hydrolysis triggers a conformational change in the subunits D and F, which induces a shift of subunit d. The c-ring is subsequently rotated and results in a continuous proton translocation across the membrane. Catalytic subunit of the V1 complex of vacuolar(H+)-ATPase (V-ATPase), a multisubunit enzyme composed of a peripheral complex (V1) that hydrolyzes ATP and a membrane integral complex (V0) that translocates protons. V-ATPase is responsible for acidifying and maintaining the pH of intracellular compartments and in some cell types, is targeted to the plasma membrane, where it is responsible for acidifying the extracellular environment. This is V-type proton ATPase catalytic subunit A (VhaA) from Aedes aegypti (Yellowfever mosquito).